The primary structure comprises 464 residues: Glycine receptor subunit alpha-3 (464 aa).

An N-terminal signal peptide occupies residues 1-33 (MAHVRHFRTLLSGFYFWEAALLLSLVATKETNS). The Extracellular segment spans residues 34-255 (ARSRSAPMSP…RFHLERQMGY (222 aa)). Residue asparagine 71 is glycosylated (N-linked (GlcNAc...) asparagine). Cysteine 171 and cysteine 185 are oxidised to a cystine. Residues glutamate 225 and aspartate 227 each contribute to the Zn(2+) site. Residues cysteine 231 and cysteine 242 are joined by a disulfide bond. 235 to 240 (YNTGKF) lines the strychnine pocket. Residue histidine 248 coordinates Zn(2+). Residues 256–277 (YLIQMYIPSLLIVILSWVSFWI) form a helical membrane-spanning segment. At 278-282 (NMDAA) the chain is on the cytoplasmic side. Residues 283-303 (PARVALGITTVLTMTTQSSGS) form a helical membrane-spanning segment. The Extracellular segment spans residues 304–314 (RASLPKVSYVK). Residues 315–335 (AIDIWMAVCLLFVFSALLEYA) traverse the membrane as a helical segment. Topologically, residues 336 to 430 (AVNFVSRQHK…FIDRAKKIDT (95 aa)) are cytoplasmic. At serine 370 the chain carries Phosphoserine. Position 379 is a phosphoserine; by PKA (serine 379). The helical transmembrane segment at 431-451 (ISRACFPLAFLIFNIFYWVIY) threads the bilayer. The Extracellular segment spans residues 452–464 (KILRHEDIHHQQD).

This sequence belongs to the ligand-gated ion channel (TC 1.A.9) family. Glycine receptor (TC 1.A.9.3) subfamily. GLRA3 sub-subfamily. In terms of assembly, homopentamer (in vitro). Heteropentamer composed of GLRA3 and GLRB. Both homopentamers and heteropentamers form functional ion channels, but their characteristics are subtly different. Phosphorylated by PKA; this causes down-regulation of channel activity.

The protein resides in the postsynaptic cell membrane. It localises to the perikaryon. It is found in the cell projection. Its subcellular location is the dendrite. The protein localises to the synapse. The protein resides in the cell membrane. The enzyme catalyses chloride(in) = chloride(out). Its activity is regulated as follows. Low levels of Zn(2+) ions (1 uM) increase glycine sensitivity and decrease the glycine concentration required for half-maximal channel activity. Channel activity is strongly enhanced by ethanol. Inhibited by picrotoxin. Inhibited by prostaglandin E2, probably via PKA-mediated phosphorylation at Ser-379. Functionally, glycine receptors are ligand-gated chloride channels. Channel opening is triggered by extracellular glycine. Channel characteristics depend on the subunit composition; heteropentameric channels display faster channel closure. Plays an important role in the down-regulation of neuronal excitability. Contributes to the generation of inhibitory postsynaptic currents. Contributes to increased pain perception in response to increased prostaglandin E2 levels. Plays a role in cellular responses to ethanol. This is Glycine receptor subunit alpha-3 (Glra3) from Rattus norvegicus (Rat).